The chain runs to 302 residues: RNA polymerase II holoenzyme cyclin-like subunit (302 aa).

The 90-residue stretch at 53–142 (QQLIKLGKRM…VGECEFSLIS (90 aa)) folds into the Cyclin N-terminal domain.

This sequence belongs to the cyclin family. Cyclin C subfamily. In terms of assembly, component of the srb8-11 complex, a regulatory module of the Mediator complex.

The protein localises to the nucleus. Component of the srb8-11 complex. The srb8-11 complex is a regulatory module of the Mediator complex which is itself involved in regulation of basal and activated RNA polymerase II-dependent transcription. The srb8-11 complex may be involved in the transcriptional repression of a subset of genes regulated by Mediator. It may inhibit the association of the Mediator complex with RNA polymerase II to form the holoenzyme complex. The srb8-11 complex phosphorylates the C-terminal domain (CTD) of the largest subunit of RNA polymerase II. The sequence is that of RNA polymerase II holoenzyme cyclin-like subunit (ssn8) from Emericella nidulans (strain FGSC A4 / ATCC 38163 / CBS 112.46 / NRRL 194 / M139) (Aspergillus nidulans).